Reading from the N-terminus, the 78-residue chain is MKSGIHPEYKKFLIKVESDVFETMSTHPTGEILMDVDFRKHPAWNKDSGNVVNQSNKSVSDFNKRFSGLSFGGKKEAS.

This sequence belongs to the bacterial ribosomal protein bL31 family. Type A subfamily. Part of the 50S ribosomal subunit.

In terms of biological role, binds the 23S rRNA. The protein is Large ribosomal subunit protein bL31 (rpmE) of Rickettsia felis (strain ATCC VR-1525 / URRWXCal2) (Rickettsia azadi).